The chain runs to 520 residues: MATILIVVLLLASIGVGYGLRAKKHSETLAQARKAAEKIIEHERQKTKAEVAEYEKNSVQETQQYQETIDQELADDLHDNQRKEAWIEQRMNLLNQKKIVLTNRADALAKKRQSLLQERDNVRTTLGEAKQLITDRWNKLQEVADLEEQAASKLVLKETKQDAIRSKDEFVNNAQTELESSCEREAEDLIALAMEHSDVPRGQAENHRSFIAENAEYLGKLIGNSGQNVRAIEALTGVDIVIDDQEKEVILNGYDPVRRAVAMETMEMIKTEKRVVPDTIERLVNKANKVIDQRIRQYGEDAVRELKLKYVAPDLIKFIGRMHYRTSYGQNILEHSIETAKLAGIFAVELGEDATLARRAGLLHDIGKSIDRDIEATHVELGVELTTKYRESPVIVNTIASHHGDVEARYVIANLVEAADAISGARQGARSESVADYIQRIKSLEEIANKHPEVKESYAIQAGRELRVIVQPKETDDKTIHSLATNVKNQIEEDVTYPGQVKVTVVRKLEIVEYVEKKQA.

Residues valine 7–lysine 23 form a helical membrane-spanning segment. Residues asparagine 206 to isoleucine 269 enclose the KH domain. The 94-residue stretch at isoleucine 332–alanine 425 folds into the HD domain.

It belongs to the RNase Y family.

It localises to the cell membrane. Functionally, endoribonuclease that initiates mRNA decay. The chain is Ribonuclease Y 2 from Pediococcus pentosaceus (strain ATCC 25745 / CCUG 21536 / LMG 10740 / 183-1w).